We begin with the raw amino-acid sequence, 461 residues long: Ornithine decarboxylase (461 aa).

The residue at position 69 (Lys-69) is an N6-(pyridoxal phosphate)lysine. Residues Ser-200, Gly-237, and 274-277 contribute to the pyridoxal 5'-phosphate site; that span reads EPGR. Phosphoserine; by CK2 is present on Ser-303. 331–332 lines the substrate pocket; it reads YD. Cys-360 (proton donor; shared with dimeric partner) is an active-site residue. S-nitrosocysteine is present on Cys-360. Asp-361 serves as a coordination point for substrate. Pyridoxal 5'-phosphate is bound at residue Tyr-389.

This sequence belongs to the Orn/Lys/Arg decarboxylase class-II family. As to quaternary structure, homodimer. Only the dimer is catalytically active, as the active sites are constructed of residues from both monomers. The cofactor is pyridoxal 5'-phosphate.

It carries out the reaction L-ornithine + H(+) = putrescine + CO2. It participates in amine and polyamine biosynthesis; putrescine biosynthesis via L-ornithine pathway; putrescine from L-ornithine: step 1/1. Inhibited by antizymes (AZs) OAZ1, OAZ2 and OAZ3 in response to polyamine levels. AZs inhibit the assembly of the functional homodimer by binding to ODC monomers. Additionally, OAZ1 targets ODC monomers for ubiquitin-independent proteolytic destruction by the 26S proteasome. Catalyzes the first and rate-limiting step of polyamine biosynthesis that converts ornithine into putrescine, which is the precursor for the polyamines, spermidine and spermine. Polyamines are essential for cell proliferation and are implicated in cellular processes, ranging from DNA replication to apoptosis. The polypeptide is Ornithine decarboxylase (Odc1) (Rattus norvegicus (Rat)).